Consider the following 85-residue polypeptide: U5-theraphotoxin-Hhn1a (85 aa).

The first 21 residues, 1-21 (MKSQIFFAVAALFLLTVRTYA), serve as a signal peptide directing secretion. Residues 22-49 (SKSKEQDLRDALFSAMFSADNQLNPQER) constitute a propeptide that is removed on maturation. Disulfide bonds link C51–C65, C58–C70, and C64–C77.

This sequence belongs to the neurotoxin 10 (Hwtx-1) family. 18 (Hntx-VII) subfamily. Expressed by the venom gland.

The protein localises to the secreted. Functionally, ion channel impairing toxin that inhibits voltage-gated sodium channels. The recombinantly expressed toxin shows a weak activity against Nav1.7/SCN9A, and shifts the voltage dependence of channel activation to more depolarized potentials. This Cyriopagopus hainanus (Chinese bird spider) protein is U5-theraphotoxin-Hhn1a.